A 268-amino-acid polypeptide reads, in one-letter code: Type III pantothenate kinase (268 aa).

Asp18 to Thr25 is a binding site for ATP. Substrate is bound by residues Tyr108 and Gly115–Arg118. Asp117 (proton acceptor) is an active-site residue. Residue Asp138 coordinates K(+). Residue Thr141 participates in ATP binding. Thr193 lines the substrate pocket.

It belongs to the type III pantothenate kinase family. In terms of assembly, homodimer. NH4(+) is required as a cofactor. The cofactor is K(+).

It localises to the cytoplasm. The catalysed reaction is (R)-pantothenate + ATP = (R)-4'-phosphopantothenate + ADP + H(+). It functions in the pathway cofactor biosynthesis; coenzyme A biosynthesis; CoA from (R)-pantothenate: step 1/5. Catalyzes the phosphorylation of pantothenate (Pan), the first step in CoA biosynthesis. The sequence is that of Type III pantothenate kinase from Chlorobaculum parvum (strain DSM 263 / NCIMB 8327) (Chlorobium vibrioforme subsp. thiosulfatophilum).